The following is a 398-amino-acid chain: 4-hydroxy-3-methylbut-2-enyl diphosphate reductase (398 aa).

Cys-66 provides a ligand contact to [4Fe-4S] cluster. Residue His-96 coordinates (2E)-4-hydroxy-3-methylbut-2-enyl diphosphate. Dimethylallyl diphosphate is bound at residue His-96. Position 96 (His-96) interacts with isopentenyl diphosphate. Cys-157 is a [4Fe-4S] cluster binding site. His-185 is a (2E)-4-hydroxy-3-methylbut-2-enyl diphosphate binding site. His-185 is a dimethylallyl diphosphate binding site. An isopentenyl diphosphate-binding site is contributed by His-185. Residue Glu-187 is the Proton donor of the active site. Residue Thr-250 participates in (2E)-4-hydroxy-3-methylbut-2-enyl diphosphate binding. Residue Cys-288 participates in [4Fe-4S] cluster binding. Residues Ser-317, Ser-318, Asn-319, and Ser-380 each contribute to the (2E)-4-hydroxy-3-methylbut-2-enyl diphosphate site. Dimethylallyl diphosphate-binding residues include Ser-317, Ser-318, Asn-319, and Ser-380. 4 residues coordinate isopentenyl diphosphate: Ser-317, Ser-318, Asn-319, and Ser-380.

Belongs to the IspH family. [4Fe-4S] cluster serves as cofactor.

The enzyme catalyses isopentenyl diphosphate + 2 oxidized [2Fe-2S]-[ferredoxin] + H2O = (2E)-4-hydroxy-3-methylbut-2-enyl diphosphate + 2 reduced [2Fe-2S]-[ferredoxin] + 2 H(+). It catalyses the reaction dimethylallyl diphosphate + 2 oxidized [2Fe-2S]-[ferredoxin] + H2O = (2E)-4-hydroxy-3-methylbut-2-enyl diphosphate + 2 reduced [2Fe-2S]-[ferredoxin] + 2 H(+). It participates in isoprenoid biosynthesis; dimethylallyl diphosphate biosynthesis; dimethylallyl diphosphate from (2E)-4-hydroxy-3-methylbutenyl diphosphate: step 1/1. The protein operates within isoprenoid biosynthesis; isopentenyl diphosphate biosynthesis via DXP pathway; isopentenyl diphosphate from 1-deoxy-D-xylulose 5-phosphate: step 6/6. Catalyzes the conversion of 1-hydroxy-2-methyl-2-(E)-butenyl 4-diphosphate (HMBPP) into a mixture of isopentenyl diphosphate (IPP) and dimethylallyl diphosphate (DMAPP). Acts in the terminal step of the DOXP/MEP pathway for isoprenoid precursor biosynthesis. This is 4-hydroxy-3-methylbut-2-enyl diphosphate reductase from Prochlorococcus marinus (strain MIT 9515).